A 346-amino-acid chain; its full sequence is Cyclin-dependent kinase 2 (346 aa).

Met-1 carries the post-translational modification N-acetylmethionine. The Protein kinase domain maps to 4–334; it reads FQKVEKIGEG…AKAALAHPFF (331 aa). At Lys-6 the chain carries N6-acetyllysine. 10–18 contributes to the ATP binding site; sequence IGEGTYGVV. Phosphothreonine is present on Thr-14. The residue at position 15 (Tyr-15) is a Phosphotyrosine; by WEE1. The residue at position 19 (Tyr-19) is a Phosphotyrosine. Residues Lys-33, 81–83, and Asp-86 contribute to the ATP site; that span reads EFL. Asp-127 serves as the catalytic Proton acceptor. ATP contacts are provided by residues 129–132 and Asp-145; that span reads KPQN. The Mg(2+) site is built by Asn-132 and Asp-145. Residue Thr-160 is modified to Phosphothreonine; by CAK and CCRK. Phosphoserine is present on Ser-218.

The protein belongs to the protein kinase superfamily. CMGC Ser/Thr protein kinase family. CDC2/CDKX subfamily. Found in a complex with CABLES1, CCNA1 and CCNE1. Interacts with CABLES1. Interacts with UHRF2. Part of a complex consisting of UHRF2, CDK2 and CCNE1. Interacts with the Speedy/Ringo proteins SPDYA and SPDYC. Interaction with SPDYA promotes kinase activation via a conformation change that alleviates obstruction of the substrate-binding cleft by the T-loop. Found in a complex with both SPDYA and CDKN1B/KIP1. Binds to RB1 and CDK7. Binding to CDKN1A (p21) leads to CDK2/cyclin E inactivation at the G1-S phase DNA damage checkpoint, thereby arresting cells at the G1-S transition during DNA repair. Associated with PTPN6 and beta-catenin/CTNNB1. Interacts with CACUL1. May interact with CEP63. Interacts with ANKRD17. Interacts with CEBPA (when phosphorylated). Forms a ternary complex with CCNA2 and CDKN1B; CDKN1B inhibits the kinase activity of CDK2 through conformational rearrangements. Interacts with cyclins A, B1, B3, D, or E. Interacts with CDK2AP2. Requires Mg(2+) as cofactor. Post-translationally, phosphorylated at Thr-160 by CDK7 in a CAK complex. Phosphorylation at Thr-160 promotes kinase activity, whereas phosphorylation at Tyr-15 by WEE1 reduces slightly kinase activity. Phosphorylated on Thr-14 and Tyr-15 during S and G2 phases before being dephosphorylated by CDC25A. Nitrosylated after treatment with nitric oxide (DETA-NO).

The protein resides in the cytoplasm. It is found in the cytoskeleton. Its subcellular location is the microtubule organizing center. It localises to the centrosome. The protein localises to the nucleus. The protein resides in the cajal body. It is found in the endosome. The enzyme catalyses L-seryl-[protein] + ATP = O-phospho-L-seryl-[protein] + ADP + H(+). The catalysed reaction is L-threonyl-[protein] + ATP = O-phospho-L-threonyl-[protein] + ADP + H(+). Phosphorylation at Thr-14 or Tyr-15 inactivates the enzyme, while phosphorylation at Thr-160 activates it. Stimulated by MYC. Inactivated by CDKN1A (p21). Functionally, serine/threonine-protein kinase involved in the control of the cell cycle; essential for meiosis, but dispensable for mitosis. Phosphorylates CABLES1, CTNNB1, CDK2AP2, ERCC6, NBN, USP37, p53/TP53, NPM1, CDK7, RB1, BRCA2, MYC, NPAT, EZH2. Triggers duplication of centrosomes and DNA. Acts at the G1-S transition to promote the E2F transcriptional program and the initiation of DNA synthesis, and modulates G2 progression; controls the timing of entry into mitosis/meiosis by controlling the subsequent activation of cyclin B/CDK1 by phosphorylation, and coordinates the activation of cyclin B/CDK1 at the centrosome and in the nucleus. Crucial role in orchestrating a fine balance between cellular proliferation, cell death, and DNA repair in embryonic stem cells (ESCs). Activity of CDK2 is maximal during S phase and G2; activated by interaction with cyclin E during the early stages of DNA synthesis to permit G1-S transition, and subsequently activated by cyclin A2 (cyclin A1 in germ cells) during the late stages of DNA replication to drive the transition from S phase to mitosis, the G2 phase. EZH2 phosphorylation promotes H3K27me3 maintenance and epigenetic gene silencing. Cyclin E/CDK2 prevents oxidative stress-mediated Ras-induced senescence by phosphorylating MYC. Involved in G1-S phase DNA damage checkpoint that prevents cells with damaged DNA from initiating mitosis; regulates homologous recombination-dependent repair by phosphorylating BRCA2, this phosphorylation is low in S phase when recombination is active, but increases as cells progress towards mitosis. In response to DNA damage, double-strand break repair by homologous recombination a reduction of CDK2-mediated BRCA2 phosphorylation. Involved in regulation of telomere repair by mediating phosphorylation of NBN. Phosphorylation of RB1 disturbs its interaction with E2F1. NPM1 phosphorylation by cyclin E/CDK2 promotes its dissociation from unduplicated centrosomes, thus initiating centrosome duplication. Cyclin E/CDK2-mediated phosphorylation of NPAT at G1-S transition and until prophase stimulates the NPAT-mediated activation of histone gene transcription during S phase. Required for vitamin D-mediated growth inhibition by being itself inactivated. Involved in the nitric oxide- (NO) mediated signaling in a nitrosylation/activation-dependent manner. USP37 is activated by phosphorylation and thus triggers G1-S transition. CTNNB1 phosphorylation regulates insulin internalization. Phosphorylates FOXP3 and negatively regulates its transcriptional activity and protein stability. Phosphorylates ERCC6 which is essential for its chromatin remodeling activity at DNA double-strand breaks. Acts as a regulator of the phosphatidylinositol 3-kinase/protein kinase B signal transduction by mediating phosphorylation of the C-terminus of protein kinase B (PKB/AKT1 and PKB/AKT2), promoting its activation. This is Cyclin-dependent kinase 2 (Cdk2) from Mus musculus (Mouse).